A 492-amino-acid chain; its full sequence is Glutamyl-tRNA(Gln) amidotransferase subunit A (492 aa).

Active-site charge relay system residues include lysine 78 and serine 158. Serine 182 functions as the Acyl-ester intermediate in the catalytic mechanism.

It belongs to the amidase family. GatA subfamily. Heterotrimer of A, B and C subunits.

The enzyme catalyses L-glutamyl-tRNA(Gln) + L-glutamine + ATP + H2O = L-glutaminyl-tRNA(Gln) + L-glutamate + ADP + phosphate + H(+). In terms of biological role, allows the formation of correctly charged Gln-tRNA(Gln) through the transamidation of misacylated Glu-tRNA(Gln) in organisms which lack glutaminyl-tRNA synthetase. The reaction takes place in the presence of glutamine and ATP through an activated gamma-phospho-Glu-tRNA(Gln). In Rhodopseudomonas palustris (strain BisB5), this protein is Glutamyl-tRNA(Gln) amidotransferase subunit A.